The primary structure comprises 636 residues: Protein cueball (636 aa).

The first 27 residues, 1–27, serve as a signal peptide directing secretion; that stretch reads MKLCTSQQFGVAVLFIVLNICSPLADA. Residues 28–517 are Extracellular-facing; that stretch reads SPIAWDFAVT…ADGPSSLRSG (490 aa). N-linked (GlcNAc...) asparagine glycans are attached at residues asparagine 83 and asparagine 109. 3 LDL-receptor class B repeats span residues 122-169, 170-214, and 215-260; these read RNLF…DICR, RQLY…DQLS, and DRIF…TEDT. The N-linked (GlcNAc...) asparagine glycan is linked to asparagine 190. N-linked (GlcNAc...) asparagine glycosylation is found at asparagine 285 and asparagine 339. EGF-like domains are found at residues 350 to 384 and 419 to 456; these read RMDA…ARCE and EYYK…TRCE. Intrachain disulfides connect cysteine 359/cysteine 372, cysteine 374/cysteine 383, cysteine 423/cysteine 433, cysteine 427/cysteine 444, and cysteine 446/cysteine 455. Asparagine 449, asparagine 458, and asparagine 493 each carry an N-linked (GlcNAc...) asparagine glycan. The helical transmembrane segment at 518–538 threads the bilayer; sequence SVIIVLVVGIVSSLALVAVIV. The Cytoplasmic portion of the chain corresponds to 539-636; that stretch reads HGLRLIYKPK…IHNMEDDLLT (98 aa).

It belongs to the cueball family.

It is found in the cell membrane. Has a role in spermatogenesis and oogenesis. In Drosophila virilis (Fruit fly), this protein is Protein cueball.